Reading from the N-terminus, the 384-residue chain is Lipid-A-disaccharide synthase (384 aa).

The protein belongs to the LpxB family.

It catalyses the reaction a lipid X + a UDP-2-N,3-O-bis[(3R)-3-hydroxyacyl]-alpha-D-glucosamine = a lipid A disaccharide + UDP + H(+). The protein operates within bacterial outer membrane biogenesis; LPS lipid A biosynthesis. Its function is as follows. Condensation of UDP-2,3-diacylglucosamine and 2,3-diacylglucosamine-1-phosphate to form lipid A disaccharide, a precursor of lipid A, a phosphorylated glycolipid that anchors the lipopolysaccharide to the outer membrane of the cell. The polypeptide is Lipid-A-disaccharide synthase (Geobacter metallireducens (strain ATCC 53774 / DSM 7210 / GS-15)).